A 292-amino-acid chain; its full sequence is Probable ABC transporter permease protein YurN (292 aa).

6 helical membrane passes run 7-27 (IIPY…YIPI), 70-90 (VLYA…LAAV), 106-126 (VFFL…DFIY), 160-180 (VIFV…IVSI), 215-235 (FVAV…PYIL), and 260-280 (MMGY…ALSL). One can recognise an ABC transmembrane type-1 domain in the interval 66-282 (LTNNVLYAVI…IITLALSLMQ (217 aa)).

This sequence belongs to the binding-protein-dependent transport system permease family. MalFG subfamily.

Its subcellular location is the cell membrane. In terms of biological role, probably part of the binding-protein-dependent transport system YurMNO. Probably responsible for the translocation of the substrate across the membrane. This is Probable ABC transporter permease protein YurN (yurN) from Bacillus subtilis (strain 168).